A 273-amino-acid polypeptide reads, in one-letter code: Dermonecrotic toxin LarSicTox-alphaVII1 (273 aa).

The active site involves H5. Mg(2+)-binding residues include E25 and D27. Residue H41 is the Nucleophile of the active site. 2 disulfide bridges follow: C45–C51 and C47–C192. D85 contacts Mg(2+).

It belongs to the arthropod phospholipase D family. Class II subfamily. Mg(2+) is required as a cofactor. Expressed by the venom gland.

Its subcellular location is the secreted. It carries out the reaction an N-(acyl)-sphingosylphosphocholine = an N-(acyl)-sphingosyl-1,3-cyclic phosphate + choline. It catalyses the reaction an N-(acyl)-sphingosylphosphoethanolamine = an N-(acyl)-sphingosyl-1,3-cyclic phosphate + ethanolamine. The enzyme catalyses a 1-acyl-sn-glycero-3-phosphocholine = a 1-acyl-sn-glycero-2,3-cyclic phosphate + choline. The catalysed reaction is a 1-acyl-sn-glycero-3-phosphoethanolamine = a 1-acyl-sn-glycero-2,3-cyclic phosphate + ethanolamine. Functionally, dermonecrotic toxins cleave the phosphodiester linkage between the phosphate and headgroup of certain phospholipids (sphingolipid and lysolipid substrates), forming an alcohol (often choline) and a cyclic phosphate. This toxin acts on sphingomyelin (SM). It may also act on ceramide phosphoethanolamine (CPE), lysophosphatidylcholine (LPC) and lysophosphatidylethanolamine (LPE), but not on lysophosphatidylserine (LPS), and lysophosphatidylglycerol (LPG). It acts by transphosphatidylation, releasing exclusively cyclic phosphate products as second products. Induces dermonecrosis, hemolysis, increased vascular permeability, edema, inflammatory response, and platelet aggregation. The chain is Dermonecrotic toxin LarSicTox-alphaVII1 from Loxosceles arizonica (Arizona brown spider).